The sequence spans 568 residues: Probable pectinesterase/pectinesterase inhibitor 23 (568 aa).

The signal sequence occupies residues 1–33 (MGSDGDKKKKFIVAGSVSGFLVIMVVSVAVVTS). A pectinesterase inhibitor 23 region spans residues 45-198 (RKTTKAVQAV…RELSSNSLAM (154 aa)). N-linked (GlcNAc...) asparagine glycosylation is found at Asn-94, Asn-210, and Asn-316. Residues 251-548 (PGPVKANAVV…PQDALLYTGD (298 aa)) form a pectinesterase 23 region. The substrate site is built by Thr-333 and Gln-363. Asp-386 serves as the catalytic Proton donor; for pectinesterase activity. Cysteines 400 and 420 form a disulfide. Residue Asp-407 is the Nucleophile; for pectinesterase activity of the active site. Substrate-binding residues include Arg-475 and Trp-477.

It in the N-terminal section; belongs to the PMEI family. The protein in the C-terminal section; belongs to the pectinesterase family. As to expression, expressed in mature pollen grains in the anthers and on the stigma. Found in pollen tubes within the style.

The protein resides in the secreted. It is found in the cell wall. It carries out the reaction [(1-&gt;4)-alpha-D-galacturonosyl methyl ester](n) + n H2O = [(1-&gt;4)-alpha-D-galacturonosyl](n) + n methanol + n H(+). It functions in the pathway glycan metabolism; pectin degradation; 2-dehydro-3-deoxy-D-gluconate from pectin: step 1/5. In terms of biological role, acts in the modification of cell walls via demethylesterification of cell wall pectin. The polypeptide is Probable pectinesterase/pectinesterase inhibitor 23 (PME23) (Arabidopsis thaliana (Mouse-ear cress)).